A 463-amino-acid polypeptide reads, in one-letter code: Phosphoglucosamine mutase (463 aa).

Ser110 (phosphoserine intermediate) is an active-site residue. Ser110, Asp255, Asp257, and Asp259 together coordinate Mg(2+). Ser110 is modified (phosphoserine).

It belongs to the phosphohexose mutase family. It depends on Mg(2+) as a cofactor. Activated by phosphorylation.

The catalysed reaction is alpha-D-glucosamine 1-phosphate = D-glucosamine 6-phosphate. Catalyzes the conversion of glucosamine-6-phosphate to glucosamine-1-phosphate. This is Phosphoglucosamine mutase from Koribacter versatilis (strain Ellin345).